A 316-amino-acid polypeptide reads, in one-letter code: Annexin A13 (316 aa).

Gly2 is lipidated: N-myristoyl glycine. 4 Annexin repeats span residues 14 to 85 (FDVD…ALLD), 86 to 157 (RPSE…SLLQ), 169 to 241 (DLAG…TLVR), and 245 to 316 (DCED…ALLH).

This sequence belongs to the annexin family. As to quaternary structure, monomer and homodimer. As to expression, detected in epithelial cells in colon and jejunum (at protein level). Detected in epithelial cells in jejunum.

It localises to the apical cell membrane. The protein localises to the cell membrane. The protein resides in the cytoplasmic vesicle. Its function is as follows. Binds to membranes enriched in phosphatidylserine or phosphatidylglycerol in a calcium-dependent manner. Half-maximal membrane binding requires about 60 uM calcium. Does not bind to membranes that lack phospholipids with an acidic headgroup. Functionally, binds to membranes enriched in phosphatidylserine or phosphatidylglycerol in a calcium-dependent manner, but requires higher calcium levels for membrane binding than isoform A. Half-maximal membrane binding requires about 320 uM calcium. The protein is Annexin A13 (ANXA13) of Homo sapiens (Human).